A 340-amino-acid chain; its full sequence is Flavonoid 7-O-methyltransferase 1 (340 aa).

Asp207 contacts S-adenosyl-L-methionine. The active-site Proton acceptor is the His245.

Belongs to the class I-like SAM-binding methyltransferase superfamily. Cation-independent O-methyltransferase family. Homodimer. In terms of tissue distribution, expressed in leaves.

It catalyses the reaction (2S)-naringenin + S-adenosyl-L-methionine = (2S)-sakuranetin + S-adenosyl-L-homocysteine + H(+). The catalysed reaction is scutellarein + S-adenosyl-L-methionine = scutellarein 7-methyl ether + S-adenosyl-L-homocysteine. It carries out the reaction apigenin + S-adenosyl-L-methionine = genkwanin + S-adenosyl-L-homocysteine + H(+). The enzyme catalyses luteolin + S-adenosyl-L-methionine = luteolin 7-methyl ether + S-adenosyl-L-homocysteine + H(+). It catalyses the reaction chrysoeriol + S-adenosyl-L-methionine = velutin + S-adenosyl-L-homocysteine. The catalysed reaction is diosmetin + S-adenosyl-L-methionine = luteolin 4',7-dimethyl ether + S-adenosyl-L-homocysteine. It carries out the reaction acacetin + S-adenosyl-L-methionine = apigenin 4',7-dimethyl ether + S-adenosyl-L-homocysteine. The enzyme catalyses scutellarein 4'-methyl ether + S-adenosyl-L-methionine = ladanein + S-adenosyl-L-homocysteine. Its pathway is flavonoid metabolism. Its function is as follows. Flavonoid 7-O-methyltransferase involved in the biosynthesis of polymethoxylated flavonoids natural products such as nevadensin and salvigenin, aroma compounds which contribute to the flavor of sweet basil, and exhibit pharmacological activities such as anti-allergic, anti-oxidant, antibacterial, anti-proliferative, and anti-inflammatory effects. Catalyzes S-adenosylmethionine-dependent regioselective 7-O-methylation of flavonoids; active on various hydroxylated flavonoid substrates, including apigenin (API) and luteolin (LUT), and, with a lower efficiency, scutellarein (SCU), naringenin (NAR), chrysoeriol (CHRYS), diosmetin (DIOS), acacetin (ACA) and scutellarein-7-methyl ether (SCU7Me). The polypeptide is Flavonoid 7-O-methyltransferase 1 (Ocimum basilicum (Sweet basil)).